The chain runs to 2185 residues: Genome polyprotein (2185 aa).

Glycine 2 is lipidated: N-myristoyl glycine; by host. Over 2–1495 the chain is Cytoplasmic; that stretch reads GAQVSTQKTG…HVNRAFICLQ (1494 aa). The interval 566-582 is amphipathic alpha-helix; sequence FFQGPPGEVVERAIARV. Active-site for protease 2A activity residues include histidine 872 and aspartate 890. Zn(2+) is bound by residues cysteine 907 and cysteine 909. The For protease 2A activity role is filled by cysteine 961. Residues cysteine 967 and histidine 969 each coordinate Zn(2+). Positions 1101-1173 are membrane-binding; that stretch reads NSGWLKKFTE…EQSAPSQSDQ (73 aa). The tract at residues 1101–1239 is oligomerization; that stretch reads NSGWLKKFTE…SPGAGKSVAT (139 aa). Residues 1122–1126 form an RNA-binding region; that stretch reads AIKIQ. One can recognise an SF3 helicase domain in the interval 1205–1361; that stretch reads EKKMSNYIQF…SMYSQNGKIN (157 aa). 3 residues coordinate Zn(2+): cysteine 1369, cysteine 1381, and cysteine 1386. A C4-type; degenerate zinc finger spans residues 1369–1386; that stretch reads CDEECCPVNFKKCCPLVC. Positions 1413-1420 are RNA-binding; that stretch reads EYNHRHSV. An oligomerization region spans residues 1424 to 1429; it reads LEALFQ. The stretch at 1496-1511 is an intramembrane region; that stretch reads ALTTFVSVAGIIYIIY. At 1512 to 2185 the chain is on the cytoplasmic side; the sequence is KLFAGFQGAY…TLRRKWLDSF (674 aa). At tyrosine 1521 the chain carries O-(5'-phospho-RNA)-tyrosine. Residues 1541–1719 enclose the Peptidase C3 domain; the sequence is GPAFEFAVAM…FSAALLRHYF (179 aa). Active-site for protease 3C activity residues include histidine 1580, glutamate 1611, and cysteine 1687. One can recognise a RdRp catalytic domain in the interval 1950–2066; it reads GHLIAFDYSG…SYPWPIDASL (117 aa). Residues aspartate 1956 and aspartate 2052 each contribute to the Mg(2+) site.

Belongs to the picornaviruses polyprotein family. Interacts with capsid protein VP1 and capsid protein VP3 to form heterotrimeric protomers. As to quaternary structure, interacts with capsid protein VP0, and capsid protein VP3 to form heterotrimeric protomers. Five protomers subsequently associate to form pentamers which serve as building blocks for the capsid. Interacts with capsid protein VP2, capsid protein VP3 and capsid protein VP4 following cleavage of capsid protein VP0. In terms of assembly, interacts with capsid protein VP1 and capsid protein VP3 in the mature capsid. Interacts with capsid protein VP0 and capsid protein VP1 to form heterotrimeric protomers. Five protomers subsequently associate to form pentamers which serve as building blocks for the capsid. Interacts with capsid protein VP4 in the mature capsid. Interacts with protein 2C; this interaction may be important for virion morphogenesis. As to quaternary structure, interacts with capsid protein VP1 and capsid protein VP3. In terms of assembly, homodimer. Homohexamer; forms a hexameric ring structure with 6-fold symmetry characteristic of AAA+ ATPases. Interacts (via N-terminus) with host RTN3 (via reticulon domain); this interaction is important for viral replication. Interacts with capsid protein VP3; this interaction may be important for virion morphogenesis. As to quaternary structure, interacts with protein 3CD. In terms of assembly, homodimer. Interacts with host GBF1. Interacts (via GOLD domain) with host ACBD3 (via GOLD domain); this interaction allows the formation of a viral protein 3A/ACBD3 heterotetramer with a 2:2 stoichiometry, which will stimulate the recruitment of host PI4KB in order to synthesize PI4P at the viral RNA replication sites. Interacts with RNA-directed RNA polymerase. As to quaternary structure, interacts with protein 3AB and with RNA-directed RNA polymerase. In terms of assembly, interacts with Viral protein genome-linked and with protein 3CD. Requires Mg(2+) as cofactor. In terms of processing, specific enzymatic cleavages in vivo by the viral proteases yield processing intermediates and the mature proteins. Post-translationally, myristoylation is required for the formation of pentamers during virus assembly. Further assembly of 12 pentamers and a molecule of genomic RNA generates the provirion. During virion maturation, immature virions are rendered infectious following cleavage of VP0 into VP4 and VP2. This maturation seems to be an autocatalytic event triggered by the presence of RNA in the capsid and it is followed by a conformational change infectious virion. In terms of processing, myristoylation is required during RNA encapsidation and formation of the mature virus particle. Post-translationally, VPg is uridylylated by the polymerase into VPg-pUpU. This acts as a nucleotide-peptide primer for the genomic RNA replication.

It localises to the virion. The protein resides in the host cytoplasm. The protein localises to the host cytoplasmic vesicle membrane. Its subcellular location is the host nucleus. The enzyme catalyses a ribonucleoside 5'-triphosphate + H2O = a ribonucleoside 5'-diphosphate + phosphate + H(+). The catalysed reaction is Selective cleavage of Tyr-|-Gly bond in the picornavirus polyprotein.. It carries out the reaction RNA(n) + a ribonucleoside 5'-triphosphate = RNA(n+1) + diphosphate. It catalyses the reaction Selective cleavage of Gln-|-Gly bond in the poliovirus polyprotein. In other picornavirus reactions Glu may be substituted for Gln, and Ser or Thr for Gly.. Replication or transcription is subject to high level of random mutations by the nucleotide analog ribavirin. Forms an icosahedral capsid of pseudo T=3 symmetry with capsid proteins VP2 and VP3. The capsid is 300 Angstroms in diameter, composed of 60 copies of each capsid protein and enclosing the viral positive strand RNA genome. Capsid protein VP1 mainly forms the vertices of the capsid. Capsid protein VP1 interacts with host cell receptor to provide virion attachment to target host cells. This attachment induces virion internalization. Tyrosine kinases are probably involved in the entry process. After binding to its receptor, the capsid undergoes conformational changes. Capsid protein VP1 N-terminus (that contains an amphipathic alpha-helix) and capsid protein VP4 are externalized. Together, they shape a pore in the host membrane through which viral genome is translocated to host cell cytoplasm. Functionally, forms an icosahedral capsid of pseudo T=3 symmetry with capsid proteins VP2 and VP3. The capsid is 300 Angstroms in diameter, composed of 60 copies of each capsid protein and enclosing the viral positive strand RNA genome. In terms of biological role, lies on the inner surface of the capsid shell. After binding to the host receptor, the capsid undergoes conformational changes. Capsid protein VP4 is released, Capsid protein VP1 N-terminus is externalized, and together, they shape a pore in the host membrane through which the viral genome is translocated into the host cell cytoplasm. Its function is as follows. Component of immature procapsids, which is cleaved into capsid proteins VP4 and VP2 after maturation. Allows the capsid to remain inactive before the maturation step. Cysteine protease that cleaves viral polyprotein and specific host proteins. It is responsible for the autocatalytic cleavage between the P1 and P2 regions, which is the first cleavage occurring in the polyprotein. Also cleaves the host translation initiation factor EIF4G1, in order to shut down the capped cellular mRNA translation. Inhibits the host nucleus-cytoplasm protein and RNA trafficking by cleaving host members of the nuclear pores. Counteracts stress granule formation probably by antagonizing its assembly or promoting its dissassembly. Functionally, plays an essential role in the virus replication cycle by acting as a viroporin. Creates a pore in the host endoplasmic reticulum and as a consequence releases Ca2+ in the cytoplasm of infected cell. In turn, high levels of cytoplasmic calcium may trigger membrane trafficking and transport of viral ER-associated proteins to viroplasms, sites of viral genome replication. In terms of biological role, induces and associates with structural rearrangements of intracellular membranes. Displays RNA-binding, nucleotide binding and NTPase activities. May play a role in virion morphogenesis and viral RNA encapsidation by interacting with the capsid protein VP3. Its function is as follows. Localizes the viral replication complex to the surface of membranous vesicles. Together with protein 3CD binds the Cis-Active RNA Element (CRE) which is involved in RNA synthesis initiation. Acts as a cofactor to stimulate the activity of 3D polymerase, maybe through a nucleid acid chaperone activity. Localizes the viral replication complex to the surface of membranous vesicles. It inhibits host cell endoplasmic reticulum-to-Golgi apparatus transport and causes the disassembly of the Golgi complex, possibly through GBF1 interaction. This would result in depletion of MHC, trail receptors and IFN receptors at the host cell surface. Plays an essential role in viral RNA replication by recruiting ACBD3 and PI4KB at the viral replication sites, thereby allowing the formation of the rearranged membranous structures where viral replication takes place. Functionally, acts as a primer for viral RNA replication and remains covalently bound to viral genomic RNA. VPg is uridylylated prior to priming replication into VPg-pUpU. The oriI viral genomic sequence may act as a template for this. The VPg-pUpU is then used as primer on the genomic RNA poly(A) by the RNA-dependent RNA polymerase to replicate the viral genome. During genome replication, the VPg-RNA linkage is removed by the host TDP2, thereby accelerating replication. During the late stage of the replication cycle, host TDP2 is excluded from sites of viral RNA synthesis and encapsidation, allowing for the generation of progeny virions. In terms of biological role, involved in the viral replication complex and viral polypeptide maturation. It exhibits protease activity with a specificity and catalytic efficiency that is different from protease 3C. Protein 3CD lacks polymerase activity. Protein 3CD binds to the 5'UTR of the viral genome. Its function is as follows. Major viral protease that mediates proteolytic processing of the polyprotein. Cleaves host EIF5B, contributing to host translation shutoff. Also cleaves host PABPC1, contributing to host translation shutoff. Cleaves host NLRP1, triggers host N-glycine-mediated degradation of the autoinhibitory NLRP1 N-terminal fragment. Replicates the viral genomic RNA on the surface of intracellular membranes. May form linear arrays of subunits that propagate along a strong head-to-tail interaction called interface-I. Covalently attaches UMP to a tyrosine of VPg, which is used to prime RNA synthesis. The positive stranded RNA genome is first replicated at virus induced membranous vesicles, creating a dsRNA genomic replication form. This dsRNA is then used as template to synthesize positive stranded RNA genomes. ss(+)RNA genomes are either translated, replicated or encapsidated. This chain is Genome polyprotein, found in Swine vesicular disease virus (strain H/3 '76) (SVDV).